The sequence spans 1098 residues: MGFNEFIGKLFGNKATRDMKEIKPWVDKIKAVYPEIAKLSNDELRAKTVELKKYISDSAAEEQKKIEELKGTIETTELEDREGIFAQIDKLEKEVLEKYEKALDDVLPQAFAIVKDTARRFSENPELVVTATDFDRELAAQGKDFVRIEDDKAIWQNHWIAGGNDMVWSMVHYDVQLFGGVVLHKGKIAEMATGEGKTLVATLPVFLNALTGNGVHVVTVNDYLSKRDSEWMGPLYQFHGLSVDCIDKHQPNSDARRRAYMADITFGTNNEFGFDYLRDNMAVSPKDLVQRKHNYAIVDEVDSVLIDDARTPLIISGPVPKGEDQLFEQLRPLVERLFEAQKKLATQYLADAKRLIASDDKKDQEEGFLALFRSHKALPKNKPLIKFLSEQGIKAGMLKTEEIYMEQNNKRMPEATDPLYFVIDEKQNSVDLTDKGIDLITGNAADPTLFVLPDITSQLSALENETDLTEEEKLAKKDELMTNYAIKSERVHTINQLLKAYAMFEKDDEYVVIDGQVKIVDEQTGRIMEGRRYSDGLHQAIEAKEGVKVEAATQTFATITLQNYFRMYHKLSGMTGTAETEAGELWDIYKLDVVVIPTNRPIARKDMNDRVYKTKREKYKAVIEEIEEMVKEGRPVLVGTTSVEISEMLSKMLAMRKIEHNVLNAKLHQREADIVAQAGQKSIVTIATNMAGRGTDIKLSPEVKAAGGLAIIGTERHESRRVDRQLRGRAGRQGDPGSSVFFVSLEDDLMRLFSSDRIASVMDKLGFKEGEMIEHKMISNSIERAQKKVEENNFGIRKRLLEYDDVMNKQRVAVYTKRRHALMGERIGMDIVNMIWDRCAYAVELGDFDNVKMEILQTLAMEVPFTEEEYNKMRKEDLAEKTFEAAMNNFKRKTDRMAQIANPVIKQVYEMQGHMYENIMIPITDGKRLYNISVNLKAAYETEGKEIVKSFEKAILLHTIDDAWKENLRELDELKHSVQNASYEQKDPLLIFKLESVNLFDNMVNKINNNTISVLMRGQIPVQEPEQVREAAPEPQAPRQQYREEKQDLSDPHQQAAAEHDTREVKREPVRAEKTVGRNDPCPCGSGKKYKNCHGQNA.

ATP-binding positions include glutamine 176, 194-198 (GEGKT), and aspartate 696. The segment at 1024 to 1098 (EPEQVREAAP…KYKNCHGQNA (75 aa)) is disordered. Composition is skewed to basic and acidic residues over residues 1041 to 1051 (QYREEKQDLSD) and 1058 to 1077 (AEHD…KTVG). 4 residues coordinate Zn(2+): cysteine 1082, cysteine 1084, cysteine 1093, and histidine 1094.

Belongs to the SecA family. In terms of assembly, monomer and homodimer. Part of the essential Sec protein translocation apparatus which comprises SecA, SecYEG and auxiliary proteins SecDF. Other proteins may also be involved. It depends on Zn(2+) as a cofactor.

The protein localises to the cell inner membrane. Its subcellular location is the cytoplasm. It catalyses the reaction ATP + H2O + cellular proteinSide 1 = ADP + phosphate + cellular proteinSide 2.. Part of the Sec protein translocase complex. Interacts with the SecYEG preprotein conducting channel. Has a central role in coupling the hydrolysis of ATP to the transfer of proteins into and across the cell membrane, serving as an ATP-driven molecular motor driving the stepwise translocation of polypeptide chains across the membrane. This is Protein translocase subunit SecA from Phocaeicola vulgatus (strain ATCC 8482 / DSM 1447 / JCM 5826 / CCUG 4940 / NBRC 14291 / NCTC 11154) (Bacteroides vulgatus).